Here is a 367-residue protein sequence, read N- to C-terminus: Uroporphyrinogen decarboxylase (367 aa).

Methionine 1 is subject to N-acetylmethionine. Positions 37, 39, 41, 50, 86, 164, 219, and 339 each coordinate coproporphyrinogen I. 3 residues coordinate coproporphyrinogen III: arginine 37, alanine 39, and arginine 41. Positions 86, 164, 219, and 339 each coordinate coproporphyrinogen III.

It belongs to the uroporphyrinogen decarboxylase family. Homodimer.

The protein localises to the cytoplasm. Its subcellular location is the cytosol. It carries out the reaction uroporphyrinogen III + 4 H(+) = coproporphyrinogen III + 4 CO2. The enzyme catalyses uroporphyrinogen I + 4 H(+) = coproporphyrinogen I + 4 CO2. It participates in porphyrin-containing compound metabolism; protoporphyrin-IX biosynthesis; coproporphyrinogen-III from 5-aminolevulinate: step 4/4. In terms of biological role, catalyzes the sequential decarboxylation of the four acetate side chains of uroporphyrinogen to form coproporphyrinogen and participates in the fifth step in the heme biosynthetic pathway. Isomer I or isomer III of uroporphyrinogen may serve as substrate, but only coproporphyrinogen III can ultimately be converted to heme. In vitro also decarboxylates pentacarboxylate porphyrinogen I. This Mus musculus (Mouse) protein is Uroporphyrinogen decarboxylase.